Here is a 347-residue protein sequence, read N- to C-terminus: GTPase Obg (347 aa).

An Obg domain is found at 1–159; it reads MQFLDQAKIY…AWVWLRLKLL (159 aa). The tract at residues 124–144 is disordered; it reads GRGNASYKSSTNRAPRQHGPG. An OBG-type G domain is found at 160–327; that stretch reads ADVGLVGLPN…ILDQLITMTG (168 aa). GTP is bound by residues 166 to 173, 191 to 195, 212 to 215, 279 to 282, and 308 to 310; these read GLPNAGKS, FTTLH, DIPG, NKID, and SGA. Mg(2+) is bound by residues Ser173 and Thr193.

It belongs to the TRAFAC class OBG-HflX-like GTPase superfamily. OBG GTPase family. In terms of assembly, monomer. The cofactor is Mg(2+).

The protein localises to the cytoplasm. Its function is as follows. An essential GTPase which binds GTP, GDP and possibly (p)ppGpp with moderate affinity, with high nucleotide exchange rates and a fairly low GTP hydrolysis rate. Plays a role in control of the cell cycle, stress response, ribosome biogenesis and in those bacteria that undergo differentiation, in morphogenesis control. This Zymomonas mobilis subsp. mobilis (strain ATCC 31821 / ZM4 / CP4) protein is GTPase Obg.